The sequence spans 92 residues: Small ribosomal subunit protein uS19 (92 aa).

Belongs to the universal ribosomal protein uS19 family.

Its function is as follows. Protein S19 forms a complex with S13 that binds strongly to the 16S ribosomal RNA. In Rhodopseudomonas palustris (strain BisB18), this protein is Small ribosomal subunit protein uS19.